Here is a 120-residue protein sequence, read N- to C-terminus: Seripauperin-24 (120 aa).

Positions 1–20 (MVKLTSIAAGVAAIAATASA) are cleaved as a signal peptide.

It belongs to the SRP1/TIP1 family. Seripauperin subfamily. In terms of processing, O-glycosylated.

The protein resides in the secreted. The protein localises to the cell wall. Component of the cell wall. This chain is Seripauperin-24 (PAU24), found in Saccharomyces cerevisiae (strain ATCC 204508 / S288c) (Baker's yeast).